Here is an 88-residue protein sequence, read N- to C-terminus: Gene 86 protein (88 aa).

The polypeptide is Gene 86 protein (86) (Mycobacterium phage D29 (Mycobacteriophage D29)).